The following is a 139-amino-acid chain: Plastocyanin (139 aa).

The signal sequence occupies residues 1 to 34; sequence MKLIAQISRSLSLALFALVLMVGSFVAVMSPAAA. Residues 35 to 139 form the Plastocyanin-like domain; sequence ETFTVKMGAD…GMVGKITVEG (105 aa). Histidine 73, cysteine 123, histidine 126, and methionine 131 together coordinate Cu cation.

This sequence belongs to the plastocyanin family. It depends on Cu(2+) as a cofactor.

It localises to the cellular thylakoid membrane. Participates in electron transfer between P700 and the cytochrome b6-f complex in photosystem I. This chain is Plastocyanin (petE), found in Leptolyngbya laminosa (Phormidium laminosum).